Consider the following 79-residue polypeptide: Translational regulator CsrA (79 aa).

Belongs to the CsrA/RsmA family. Homodimer; the beta-strands of each monomer intercalate to form a hydrophobic core, while the alpha-helices form wings that extend away from the core.

The protein localises to the cytoplasm. A translational regulator that binds mRNA to regulate translation initiation and/or mRNA stability. Usually binds in the 5'-UTR at or near the Shine-Dalgarno sequence preventing ribosome-binding, thus repressing translation. Its main target seems to be the major flagellin gene, while its function is anatagonized by FliW. The polypeptide is Translational regulator CsrA (Shouchella clausii (strain KSM-K16) (Alkalihalobacillus clausii)).